Consider the following 190-residue polypeptide: Large ribosomal subunit protein bL25 (190 aa).

This sequence belongs to the bacterial ribosomal protein bL25 family. CTC subfamily. As to quaternary structure, part of the 50S ribosomal subunit; part of the 5S rRNA/L5/L18/L25 subcomplex. Contacts the 5S rRNA. Binds to the 5S rRNA independently of L5 and L18.

In terms of biological role, this is one of the proteins that binds to the 5S RNA in the ribosome where it forms part of the central protuberance. This is Large ribosomal subunit protein bL25 from Neisseria meningitidis serogroup C / serotype 2a (strain ATCC 700532 / DSM 15464 / FAM18).